A 465-amino-acid polypeptide reads, in one-letter code: Mitochondrial distribution and morphology protein 10 (465 aa).

This sequence belongs to the MDM10 family. As to quaternary structure, component of the ER-mitochondria encounter structure (ERMES) or MDM complex, composed of MMM1, MDM10, MDM12 and MDM34. Associates with the mitochondrial outer membrane sorting assembly machinery SAM(core) complex.

It localises to the mitochondrion outer membrane. Its function is as follows. Component of the ERMES/MDM complex, which serves as a molecular tether to connect the endoplasmic reticulum and mitochondria. Components of this complex are involved in the control of mitochondrial shape and protein biogenesis and may function in phospholipid exchange. MDM10 is involved in the late assembly steps of the general translocase of the mitochondrial outer membrane (TOM complex). Functions in the TOM40-specific route of the assembly of outer membrane beta-barrel proteins, including the association of TOM40 with the receptor TOM22 and small TOM proteins. Can associate with the SAM(core) complex as well as the MDM12-MMM1 complex, both involved in late steps of the major beta-barrel assembly pathway, that is responsible for biogenesis of all outer membrane beta-barrel proteins. May act as a switch that shuttles between both complexes and channels precursor proteins into the TOM40-specific pathway. Plays a role in mitochondrial morphology and in the inheritance of mitochondria. The sequence is that of Mitochondrial distribution and morphology protein 10 from Eremothecium gossypii (strain ATCC 10895 / CBS 109.51 / FGSC 9923 / NRRL Y-1056) (Yeast).